The primary structure comprises 241 residues: 2-C-methyl-D-erythritol 4-phosphate cytidylyltransferase (241 aa).

This sequence belongs to the IspD/TarI cytidylyltransferase family. IspD subfamily.

It carries out the reaction 2-C-methyl-D-erythritol 4-phosphate + CTP + H(+) = 4-CDP-2-C-methyl-D-erythritol + diphosphate. It participates in isoprenoid biosynthesis; isopentenyl diphosphate biosynthesis via DXP pathway; isopentenyl diphosphate from 1-deoxy-D-xylulose 5-phosphate: step 2/6. In terms of biological role, catalyzes the formation of 4-diphosphocytidyl-2-C-methyl-D-erythritol from CTP and 2-C-methyl-D-erythritol 4-phosphate (MEP). The sequence is that of 2-C-methyl-D-erythritol 4-phosphate cytidylyltransferase from Shewanella denitrificans (strain OS217 / ATCC BAA-1090 / DSM 15013).